The sequence spans 454 residues: Growth/differentiation factor 6 (454 aa).

A signal peptide spans 1 to 22; sequence MDTPRVLLWAIFLISFLWDLPG. Residues 23–334 constitute a propeptide that is removed on maturation; it reads FQQASISSSS…LPSPGRRRRR (312 aa). Residues 28 to 93 form a disordered region; the sequence is ISSSSSSSTE…QGQEPPGRGL (66 aa). Composition is skewed to basic and acidic residues over residues 39–52 and 60–73; these read DSTK…EGKM and AEGR…LRQK. Low complexity predominate over residues 81–92; that stretch reads GQHQGQEPPGRG. Asparagine 117 carries an N-linked (GlcNAc...) asparagine glycan. 2 disordered regions span residues 247-268 and 303-350; these read DTGA…SLGF and AEAA…KKSR. The segment covering 303–319 has biased composition (low complexity); the sequence is AEAAGAEGSWPAPSGSP. Residues 329–350 show a composition bias toward basic residues; it reads GRRRRRTAFASRHGKRHGKKSR. 3 disulfide bridges follow: cysteine 353/cysteine 419, cysteine 382/cysteine 451, and cysteine 386/cysteine 453.

It belongs to the TGF-beta family. As to quaternary structure, homodimer; disulfide-linked. Expressed in different subsets of developing joints. Highly expressed in the cochlea.

It is found in the secreted. Growth factor that controls proliferation and cellular differentiation in the retina and bone formation. Plays a key role in regulating apoptosis during retinal development. Establishes dorsal-ventral positional information in the retina and controls the formation of the retinotectal map. Required for normal formation of bones and joints in the limbs, skull, digits and axial skeleton. Plays a key role in establishing boundaries between skeletal elements during development. Regulation of GDF6 expression seems to be a mechanism for evolving species-specific changes in skeletal structures. Seems to positively regulate differentiation of chondrogenic tissue through the growth factor receptors subunits BMPR1A, BMPR1B, BMPR2 and ACVR2A, leading to the activation of SMAD1-SMAD5-SMAD8 complex. The regulation of chondrogenic differentiation is inhibited by NOG. Also involved in the induction of adipogenesis from mesenchymal stem cells. This mechanism acts through the growth factor receptors subunits BMPR1A, BMPR2 and ACVR2A and the activation of SMAD1-SMAD5-SMAD8 complex and MAPK14/p38. This is Growth/differentiation factor 6 (Gdf6) from Mus musculus (Mouse).